A 275-amino-acid chain; its full sequence is Monooxygenase af470 (275 aa).

It catalyses the reaction prefumagillin + NADPH + 2 O2 = fumagillin + acetaldehyde + NADP(+) + H2O. It functions in the pathway secondary metabolite biosynthesis; terpenoid biosynthesis. Its function is as follows. Monooxygenase; part of the gene cluster that mediates the biosynthesis of fumagillin, a meroterpenoid that has numerous biological activities including irreversible inhibition of human type 2 methionine aminopeptidase (METAP2). Within the pathway, the monooxygenase af470 catalyzes the oxidative cleavage of prefumagillin to yield the final compound of the pathway, fumagillin. The pathway begins with the conversion of farnesyl pyrophosphate (FPP) to beta-trans-bergamotene by the membrane-bound beta-trans-bergamotene synthase af520. The multifunctional cytochrome P450 monooxygenase af510 then converts beta-trans-bergamotene into 5-keto-demethoxyfumagillol via several oxydation steps. 5-keto-demethoxyfumagillol is then subjected to successive C-6 hydroxylation and O-methylation by the dioxygenase af480 and O-methyltransferase af390-400, respectively, to yield 5-keto-fumagillol, which is then stereoselectively reduced by the keto-reductase af490 to 5R-hydroxy-seco-sesquiterpene. The next step is the polyketide transferase af380-catalyzed transfer of a dodecapentaenoyl group synthesized by the polyketide synthase af370 onto 5R-hydroxy-seco-sesquiterpene which leads to the production of prefumagillin. Finally, oxidative cleavage by the monooxygenase af470 converts prefumagillin to fumagillin. This is Monooxygenase af470 from Aspergillus fumigatus (strain ATCC MYA-4609 / CBS 101355 / FGSC A1100 / Af293) (Neosartorya fumigata).